The chain runs to 86 residues: Large ribosomal subunit protein uL23 (86 aa).

It belongs to the universal ribosomal protein uL23 family. In terms of assembly, part of the 50S ribosomal subunit. Contacts protein L29.

Binds to 23S rRNA. One of the proteins that surrounds the polypeptide exit tunnel on the outside of the ribosome. The protein is Large ribosomal subunit protein uL23 of Methanococcus aeolicus (strain ATCC BAA-1280 / DSM 17508 / OCM 812 / Nankai-3).